The chain runs to 299 residues: Protein N-terminal and lysine N-methyltransferase EFM7 (299 aa).

Residues tryptophan 74, 100–102 (GAG), aspartate 122, tryptophan 155, and serine 178 each bind S-adenosyl-L-methionine.

The protein belongs to the class I-like SAM-binding methyltransferase superfamily. EFM7 family.

The protein localises to the cytoplasm. S-adenosyl-L-methionine-dependent protein methyltransferase that trimethylates the N-terminal glycine 'Gly-2' of elongation factor 1-alpha, before also catalyzing the mono- and dimethylation of 'Lys-3'. This chain is Protein N-terminal and lysine N-methyltransferase EFM7, found in Cryptococcus neoformans var. neoformans serotype D (strain B-3501A) (Filobasidiella neoformans).